The sequence spans 140 residues: Nucleoside diphosphate kinase (140 aa).

Lys-11, Phe-59, Arg-87, Thr-93, Arg-104, and Asn-114 together coordinate ATP. Catalysis depends on His-117, which acts as the Pros-phosphohistidine intermediate.

It belongs to the NDK family. Homotetramer. Mg(2+) serves as cofactor.

The protein resides in the cytoplasm. The enzyme catalyses a 2'-deoxyribonucleoside 5'-diphosphate + ATP = a 2'-deoxyribonucleoside 5'-triphosphate + ADP. It carries out the reaction a ribonucleoside 5'-diphosphate + ATP = a ribonucleoside 5'-triphosphate + ADP. Functionally, major role in the synthesis of nucleoside triphosphates other than ATP. The ATP gamma phosphate is transferred to the NDP beta phosphate via a ping-pong mechanism, using a phosphorylated active-site intermediate. The polypeptide is Nucleoside diphosphate kinase (Rickettsia conorii (strain ATCC VR-613 / Malish 7)).